We begin with the raw amino-acid sequence, 68 residues long: Large ribosomal subunit protein bL35 (68 aa).

The protein belongs to the bacterial ribosomal protein bL35 family.

The polypeptide is Large ribosomal subunit protein bL35 (Rickettsia typhi (strain ATCC VR-144 / Wilmington)).